Reading from the N-terminus, the 190-residue chain is Crossover junction endodeoxyribonuclease RuvC (190 aa).

Active-site residues include D8, E67, and D139. The Mg(2+) site is built by D8, E67, and D139.

This sequence belongs to the RuvC family. Homodimer which binds Holliday junction (HJ) DNA. The HJ becomes 2-fold symmetrical on binding to RuvC with unstacked arms; it has a different conformation from HJ DNA in complex with RuvA. In the full resolvosome a probable DNA-RuvA(4)-RuvB(12)-RuvC(2) complex forms which resolves the HJ. Requires Mg(2+) as cofactor.

The protein resides in the cytoplasm. The enzyme catalyses Endonucleolytic cleavage at a junction such as a reciprocal single-stranded crossover between two homologous DNA duplexes (Holliday junction).. Its function is as follows. The RuvA-RuvB-RuvC complex processes Holliday junction (HJ) DNA during genetic recombination and DNA repair. Endonuclease that resolves HJ intermediates. Cleaves cruciform DNA by making single-stranded nicks across the HJ at symmetrical positions within the homologous arms, yielding a 5'-phosphate and a 3'-hydroxyl group; requires a central core of homology in the junction. The consensus cleavage sequence is 5'-(A/T)TT(C/G)-3'. Cleavage occurs on the 3'-side of the TT dinucleotide at the point of strand exchange. HJ branch migration catalyzed by RuvA-RuvB allows RuvC to scan DNA until it finds its consensus sequence, where it cleaves and resolves the cruciform DNA. The sequence is that of Crossover junction endodeoxyribonuclease RuvC from Haemophilus influenzae (strain PittGG).